Consider the following 102-residue polypeptide: NADH-quinone oxidoreductase subunit K (102 aa).

3 consecutive transmembrane segments (helical) span residues 3 to 23, 31 to 51, and 66 to 86; these read IGLT…AFGI, IVLL…LVAF, and FILT…VVYF.

Belongs to the complex I subunit 4L family. NDH-1 is composed of 14 different subunits. Subunits NuoA, H, J, K, L, M, N constitute the membrane sector of the complex.

It is found in the cell inner membrane. It carries out the reaction a quinone + NADH + 5 H(+)(in) = a quinol + NAD(+) + 4 H(+)(out). Its function is as follows. NDH-1 shuttles electrons from NADH, via FMN and iron-sulfur (Fe-S) centers, to quinones in the respiratory chain. The immediate electron acceptor for the enzyme in this species is believed to be ubiquinone. Couples the redox reaction to proton translocation (for every two electrons transferred, four hydrogen ions are translocated across the cytoplasmic membrane), and thus conserves the redox energy in a proton gradient. This Rhodospirillum centenum (strain ATCC 51521 / SW) protein is NADH-quinone oxidoreductase subunit K.